Here is a 239-residue protein sequence, read N- to C-terminus: Probable 2-phosphosulfolactate phosphatase (239 aa).

It belongs to the ComB family. Mg(2+) is required as a cofactor.

It carries out the reaction (2R)-O-phospho-3-sulfolactate + H2O = (2R)-3-sulfolactate + phosphate. The chain is Probable 2-phosphosulfolactate phosphatase from Clostridium botulinum (strain Kyoto / Type A2).